The primary structure comprises 228 residues: 7-cyano-7-deazaguanine synthase (228 aa).

Residue L7 to L17 participates in ATP binding. C190, C202, C205, and C208 together coordinate Zn(2+).

The protein belongs to the QueC family. Zn(2+) is required as a cofactor.

It carries out the reaction 7-carboxy-7-deazaguanine + NH4(+) + ATP = 7-cyano-7-deazaguanine + ADP + phosphate + H2O + H(+). Its pathway is purine metabolism; 7-cyano-7-deazaguanine biosynthesis. In terms of biological role, catalyzes the ATP-dependent conversion of 7-carboxy-7-deazaguanine (CDG) to 7-cyano-7-deazaguanine (preQ(0)). This chain is 7-cyano-7-deazaguanine synthase, found in Acaryochloris marina (strain MBIC 11017).